Here is a 285-residue protein sequence, read N- to C-terminus: 2-dehydro-3-deoxyphosphooctonate aldolase (285 aa).

This sequence belongs to the KdsA family.

Its subcellular location is the cytoplasm. It catalyses the reaction D-arabinose 5-phosphate + phosphoenolpyruvate + H2O = 3-deoxy-alpha-D-manno-2-octulosonate-8-phosphate + phosphate. The protein operates within carbohydrate biosynthesis; 3-deoxy-D-manno-octulosonate biosynthesis; 3-deoxy-D-manno-octulosonate from D-ribulose 5-phosphate: step 2/3. It participates in bacterial outer membrane biogenesis; lipopolysaccharide biosynthesis. The polypeptide is 2-dehydro-3-deoxyphosphooctonate aldolase (Delftia acidovorans (strain DSM 14801 / SPH-1)).